The chain runs to 293 residues: Pantothenate synthetase (293 aa).

M30–H37 is a binding site for ATP. H37 serves as the catalytic Proton donor. Q61 serves as a coordination point for (R)-pantoate. Residue Q61 coordinates beta-alanine. Position 147 to 150 (G147 to D150) interacts with ATP. Q153 contributes to the (R)-pantoate binding site. ATP is bound by residues V176 and C184–R187.

It belongs to the pantothenate synthetase family. As to quaternary structure, homodimer.

It is found in the cytoplasm. The catalysed reaction is (R)-pantoate + beta-alanine + ATP = (R)-pantothenate + AMP + diphosphate + H(+). Its pathway is cofactor biosynthesis; (R)-pantothenate biosynthesis; (R)-pantothenate from (R)-pantoate and beta-alanine: step 1/1. Its function is as follows. Catalyzes the condensation of pantoate with beta-alanine in an ATP-dependent reaction via a pantoyl-adenylate intermediate. This is Pantothenate synthetase from Brucella canis (strain ATCC 23365 / NCTC 10854 / RM-666).